The following is a 380-amino-acid chain: Queuine tRNA-ribosyltransferase (380 aa).

The Proton acceptor role is filled by D96. Substrate-binding positions include 96-100 (DSGGF), D150, Q193, and G220. The segment at 251 to 257 (GVGAPDS) is RNA binding. D270 serves as the catalytic Nucleophile. Residues 275–279 (TRIAR) form an RNA binding; important for wobble base 34 recognition region. Zn(2+) is bound by residues C308, C310, C313, and H339.

This sequence belongs to the queuine tRNA-ribosyltransferase family. Homodimer. Within each dimer, one monomer is responsible for RNA recognition and catalysis, while the other monomer binds to the replacement base PreQ1. Requires Zn(2+) as cofactor.

The enzyme catalyses 7-aminomethyl-7-carbaguanine + guanosine(34) in tRNA = 7-aminomethyl-7-carbaguanosine(34) in tRNA + guanine. It functions in the pathway tRNA modification; tRNA-queuosine biosynthesis. Catalyzes the base-exchange of a guanine (G) residue with the queuine precursor 7-aminomethyl-7-deazaguanine (PreQ1) at position 34 (anticodon wobble position) in tRNAs with GU(N) anticodons (tRNA-Asp, -Asn, -His and -Tyr). Catalysis occurs through a double-displacement mechanism. The nucleophile active site attacks the C1' of nucleotide 34 to detach the guanine base from the RNA, forming a covalent enzyme-RNA intermediate. The proton acceptor active site deprotonates the incoming PreQ1, allowing a nucleophilic attack on the C1' of the ribose to form the product. After dissociation, two additional enzymatic reactions on the tRNA convert PreQ1 to queuine (Q), resulting in the hypermodified nucleoside queuosine (7-(((4,5-cis-dihydroxy-2-cyclopenten-1-yl)amino)methyl)-7-deazaguanosine). The sequence is that of Queuine tRNA-ribosyltransferase from Streptococcus pyogenes serotype M1.